The following is a 1027-amino-acid chain: MAETNNECSIKVLCRFRPLNQAEILRGDKFIPIFQGDDSVIIGGKPYVFDRVFPPNTTQEQVYHACAMQIVKDVLAGYNGTIFAYGQTSSGKTHTMEGKLHDPQLMGIIPRIARDIFNHIYSMDENLEFHIKVSYFEIYLDKIRDLLDVTKTNLSVHEDKNRVPFVRGCTERFVSSPEEILDVIDEGKSNRHVAVTNMNEHSSRSHSIFLINIKQENIETEQKLSGKLYLADLAGSEKVSKTGAEGAVLDEAKNINKSLSALGNVISALAEGTKSYVPYRDSKMTRILQDSLGGNCRTTMFICCSPSSYNDAETKSTLMFGQRAKTIKNTASVNLELTAEQWKKKYEKEKEKTKAQKETIAKLEAELSRWRNGENVPETERLAGEDSALAAEICEETPVNDNSSIVVRIAPEERQKYEEEIRRLYKQLDDKDDEINQQSQLIEKLKQQMLDQEELLVSTRGDNEKVQRELSHLQSENDAAKEEVKEVLQALEELAVNYDQKSQEVEEKSQQNQLLVDELSQKVATMLSLESEPQRLQEVSGHQRKRIAEVLNGLMKDLSEFSVIVGNGEIKLPVEISGAIEEEFTVARLYISKIKSEVKSVVKRCRQLENLQVECHRKMEVTGRELSSCQLLISQHEAKIRSLTEYMQTVELKKRHLEESYDSLSDELAKLQAQETVHEVALKDKEPDTQDAEEVKKALELQMENHREAHHRQLARLRDEINEKQKTIDELKDLDQKLQLELEKLQADYERLKNEENEKSAKLQELTFLYERHEQSKQDLKGLEETVARELQTLHNLRKLFVQDVTTRVKKSAEMEPEDSGGIHSQKQKISFLENNLEQLTEVHKQLVRDNADLRCELPKLEKRLRATAERVKALEGALKEAKEGAMKDKRRYQQEVDRIKEAVRYKSSGKRGHSAQIAKPVRPGHYPASSPTNPYGTRSPECISYTNNLFQNYQNLHLQAAPSSTSDVYFASNGATSVAPLASYQKANTDNGNATDINDNRSDLPCGYEAEDPAKLFPLHQETAAS.

Ala2 carries the post-translational modification N-acetylalanine. In terms of domain architecture, Kinesin motor spans 9–327 (SIKVLCRFRP…LMFGQRAKTI (319 aa)). Residue 86–93 (GQTSSGKT) participates in ATP binding. Positions 174–315 (VSSPEEILDV…PSSYNDAETK (142 aa)) are microtubule-binding. A necessary for interaction with ZFYVE27 region spans residues 271 to 361 (EGTKSYVPYR…KTKAQKETIA (91 aa)). Positions 331–905 (ASVNLELTAE…EVDRIKEAVR (575 aa)) form a coiled coil. The tract at residues 353-1027 (TKAQKETIAK…FPLHQETAAS (675 aa)) is interaction with BICD2. Position 397 is a phosphothreonine (Thr397). The segment at 906–936 (YKSSGKRGHSAQIAKPVRPGHYPASSPTNPY) is disordered. A globular region spans residues 907 to 1027 (KSSGKRGHSA…FPLHQETAAS (121 aa)).

The protein belongs to the TRAFAC class myosin-kinesin ATPase superfamily. Kinesin family. Kinesin subfamily. Oligomer composed of two heavy chains and two light chains. Interacts with GRIP1. Interacts with FMR1 (via C-terminus); this interaction is increased in a mGluR-dependent manner. Interacts with BORCS5. Interacts with ZFYVE27. Interacts with VAPA, VAPB, SURF4, RAB11A (GDP-bound form), RAB11B (GDP-bound form) and RTN3 in a ZFYVE27-dependent manner. Interacts with BICD2. Interacts with DTNB. As to expression, expressed in brain.

It is found in the cytoplasm. Its subcellular location is the perinuclear region. It localises to the cytoskeleton. The protein resides in the perikaryon. The catalysed reaction is ATP + H2O + a kinesin associated with a microtubule at position (n) = ADP + phosphate a kinesin associated with a microtubule at position (n+1, toward the plus end).. Microtubule-dependent motor required for slow axonal transport of neurofilament proteins (NFH, NFM and NFL). Can induce formation of neurite-like membrane protrusions in non-neuronal cells in a ZFYVE27-dependent manner. The ZFYVE27-KIF5A complex contributes to the vesicular transport of VAPA, VAPB, SURF4, RAB11A, RAB11B and RTN3 proteins in neurons. Required for anterograde axonal transportation of MAPK8IP3/JIP3 which is essential for MAPK8IP3/JIP3 function in axon elongation. The sequence is that of Kinesin heavy chain isoform 5A from Rattus norvegicus (Rat).